The sequence spans 159 residues: UPF0699 transmembrane protein YdbS (159 aa).

A run of 2 helical transmembrane segments spans residues 22 to 42 (IIIS…SYYF) and 47 to 67 (WISG…VFII).

The protein belongs to the UPF0699 family.

It localises to the cell membrane. The polypeptide is UPF0699 transmembrane protein YdbS (ydbS) (Bacillus subtilis (strain 168)).